The chain runs to 382 residues: Galactokinase (382 aa).

34–37 (EHTD) contributes to the substrate binding site. 124–130 (GAGLSSS) provides a ligand contact to ATP. Serine 130 and glutamate 162 together coordinate Mg(2+). Aspartate 174 acts as the Proton acceptor in catalysis. Tyrosine 223 is a substrate binding site.

The protein belongs to the GHMP kinase family. GalK subfamily.

It is found in the cytoplasm. It catalyses the reaction alpha-D-galactose + ATP = alpha-D-galactose 1-phosphate + ADP + H(+). It functions in the pathway carbohydrate metabolism; galactose metabolism. In terms of biological role, catalyzes the transfer of the gamma-phosphate of ATP to D-galactose to form alpha-D-galactose-1-phosphate (Gal-1-P). This Salmonella schwarzengrund (strain CVM19633) protein is Galactokinase.